Consider the following 141-residue polypeptide: Nucleoside diphosphate kinase (141 aa).

ATP is bound by residues Lys-11, Phe-59, Arg-87, Thr-93, Arg-104, and Asn-114. His-117 functions as the Pros-phosphohistidine intermediate in the catalytic mechanism.

Belongs to the NDK family. Homotetramer. The cofactor is Mg(2+).

It is found in the cytoplasm. It catalyses the reaction a 2'-deoxyribonucleoside 5'-diphosphate + ATP = a 2'-deoxyribonucleoside 5'-triphosphate + ADP. The catalysed reaction is a ribonucleoside 5'-diphosphate + ATP = a ribonucleoside 5'-triphosphate + ADP. Its function is as follows. Major role in the synthesis of nucleoside triphosphates other than ATP. The ATP gamma phosphate is transferred to the NDP beta phosphate via a ping-pong mechanism, using a phosphorylated active-site intermediate. This is Nucleoside diphosphate kinase from Haemophilus influenzae (strain 86-028NP).